A 179-amino-acid polypeptide reads, in one-letter code: Shikimate kinase (179 aa).

Residue 12 to 17 (GVGKSK) participates in ATP binding. Ser16 contacts Mg(2+). Substrate-binding residues include Asp34, Arg61, and Gly83. ATP is bound at residue Arg131. Arg147 provides a ligand contact to substrate.

This sequence belongs to the shikimate kinase family. As to quaternary structure, monomer. The cofactor is Mg(2+).

It localises to the cytoplasm. The enzyme catalyses shikimate + ATP = 3-phosphoshikimate + ADP + H(+). It participates in metabolic intermediate biosynthesis; chorismate biosynthesis; chorismate from D-erythrose 4-phosphate and phosphoenolpyruvate: step 5/7. Functionally, catalyzes the specific phosphorylation of the 3-hydroxyl group of shikimic acid using ATP as a cosubstrate. This Leptospira borgpetersenii serovar Hardjo-bovis (strain JB197) protein is Shikimate kinase.